The primary structure comprises 407 residues: Naringenin 8-dimethylallyltransferase 2, chloroplastic (407 aa).

The N-terminal 23 residues, 1–23 (MGFVLPASFPGASSITTGGSCLR), are a transit peptide targeting the chloroplast. 8 consecutive transmembrane segments (helical) span residues 117 to 137 (FCRP…SLVA), 145 to 165 (SLAF…IHIF), 206 to 226 (ILGL…TVFI), 248 to 268 (VLTA…GFFL), 285 to 305 (LIFC…FKDI), 328 to 348 (VFWI…LVGA), 352 to 372 (ILWS…VLWY), and 383 to 403 (VVLQ…YCLI).

The protein belongs to the UbiA prenyltransferase family. Requires Mg(2+) as cofactor. The cofactor is Mn(2+).

The protein localises to the plastid. Its subcellular location is the chloroplast membrane. It catalyses the reaction (2S)-naringenin + dimethylallyl diphosphate = sophoraflavanone B + diphosphate. Involved in the biosynthesis of sophoraflavanone G (SFG). Can use flavanones (naringenin, liquiritigenin and hesperetin) as substrates, but not flavonols or isoflavones. Shows a strict specificity for dimethylallyl diphosphate. The chain is Naringenin 8-dimethylallyltransferase 2, chloroplastic (N8DT-2) from Sophora flavescens (Shrubby sophora).